We begin with the raw amino-acid sequence, 432 residues long: Trigger factor (432 aa).

The PPIase FKBP-type domain maps to 161–246 (EDRVTIDFTG…LKKVEERELP (86 aa)).

It belongs to the FKBP-type PPIase family. Tig subfamily.

Its subcellular location is the cytoplasm. The catalysed reaction is [protein]-peptidylproline (omega=180) = [protein]-peptidylproline (omega=0). In terms of biological role, involved in protein export. Acts as a chaperone by maintaining the newly synthesized protein in an open conformation. Functions as a peptidyl-prolyl cis-trans isomerase. This chain is Trigger factor, found in Klebsiella pneumoniae (strain 342).